Consider the following 312-residue polypeptide: Homoserine kinase (312 aa).

Residue 91 to 101 (PVASGLGSSAC) participates in ATP binding.

This sequence belongs to the GHMP kinase family. Homoserine kinase subfamily.

It is found in the cytoplasm. It catalyses the reaction L-homoserine + ATP = O-phospho-L-homoserine + ADP + H(+). Its pathway is amino-acid biosynthesis; L-threonine biosynthesis; L-threonine from L-aspartate: step 4/5. Catalyzes the ATP-dependent phosphorylation of L-homoserine to L-homoserine phosphate. The chain is Homoserine kinase from Blochmanniella pennsylvanica (strain BPEN).